The primary structure comprises 303 residues: N-acetyl-D-glucosamine kinase (303 aa).

ATP-binding positions include 4-11 and 133-140; these read GFDIGGTK and GVGGGLVL. Zn(2+) contacts are provided by H157, C177, C179, and C184.

It belongs to the ROK (NagC/XylR) family. NagK subfamily.

It catalyses the reaction N-acetyl-D-glucosamine + ATP = N-acetyl-D-glucosamine 6-phosphate + ADP + H(+). Its pathway is cell wall biogenesis; peptidoglycan recycling. Its function is as follows. Catalyzes the phosphorylation of N-acetyl-D-glucosamine (GlcNAc) derived from cell-wall degradation, yielding GlcNAc-6-P. In Citrobacter koseri (strain ATCC BAA-895 / CDC 4225-83 / SGSC4696), this protein is N-acetyl-D-glucosamine kinase.